Reading from the N-terminus, the 437-residue chain is UDP-N-acetylmuramate--L-alanine ligase (437 aa).

114–120 provides a ligand contact to ATP; that stretch reads GTHGKTS.

This sequence belongs to the MurCDEF family.

Its subcellular location is the cytoplasm. The enzyme catalyses UDP-N-acetyl-alpha-D-muramate + L-alanine + ATP = UDP-N-acetyl-alpha-D-muramoyl-L-alanine + ADP + phosphate + H(+). It participates in cell wall biogenesis; peptidoglycan biosynthesis. Its function is as follows. Cell wall formation. In Lactobacillus acidophilus (strain ATCC 700396 / NCK56 / N2 / NCFM), this protein is UDP-N-acetylmuramate--L-alanine ligase.